We begin with the raw amino-acid sequence, 123 residues long: Small ribosomal subunit protein uS12 (123 aa).

Residues 1–29 form a disordered region; that stretch reads MPTINQLVRKGREPQKAKSKVPAMEQNPQ. Asp-89 carries the 3-methylthioaspartic acid modification.

The protein belongs to the universal ribosomal protein uS12 family. As to quaternary structure, part of the 30S ribosomal subunit. Contacts proteins S8 and S17. May interact with IF1 in the 30S initiation complex.

Functionally, with S4 and S5 plays an important role in translational accuracy. In terms of biological role, interacts with and stabilizes bases of the 16S rRNA that are involved in tRNA selection in the A site and with the mRNA backbone. Located at the interface of the 30S and 50S subunits, it traverses the body of the 30S subunit contacting proteins on the other side and probably holding the rRNA structure together. The combined cluster of proteins S8, S12 and S17 appears to hold together the shoulder and platform of the 30S subunit. The sequence is that of Small ribosomal subunit protein uS12 from Novosphingobium aromaticivorans (strain ATCC 700278 / DSM 12444 / CCUG 56034 / CIP 105152 / NBRC 16084 / F199).